The sequence spans 831 residues: MVSSVLEVSHVFCCPNRVRGALSWNTGPGGLLAFGTSCSVVLYDPQKKVVITNLNGHTARVNCLQWIRTEDGSPSNELVSGGSDNRVIHWELENNQVLKSVRLQGHEGPVCAVHAIYQSGPSEGEQHALIASAASDSTVRIWSKKGSEVKYLQTLSFRDGFVLSVCLAILPGTNVPVLACGDDDCRIHLYIQQDDQFQKALSLCGHEDWIRGVEWATFGRDLFLASCSQDCLIRIWRLYMKPASFETKDGSLRLKENTFTIKDGGVRTTVAVTLETVLAGHENWVNAVHWQPSFYKDGVLQQPVRLLSASMDKTMILWAPDEESGVWLEQVRVGEVGGNTLGFYDCQFGENGTMIIAHAFHGALHLWKQSTVNPRQWAPEIVISGHFDGVQDLMWDPEGEFIITTSTDQTTRLFAPWKKKDQKDRSQVTWHEIARPQIHGYNIKCLAMIDRFQFVSGADEKVLRVFSAPRNFVENFSVISRQSLSHMLCDDQDLPEGATVPALGLSNKALFQGDIASQPFEEDELISPAFGSPQVTFQPAVLNEPPTEDHLLQNTLWPEIQKLYGHGYEIVCVACNNSKTLLASACKASQKEHAAIILWSTASWKQVQSLAFHTLTVTQMTFSPDDKFLLAVSRDRTWSLWKRQDATSSEFDPFFSLFAFTNKITSVHSRIIWSCDWSPDNKYFFTGSRDKKVVVWGECKSSHNPMEHPIRPCSSILDVGSSVTAVSVCPVLNPAQRYIVAIGLESGKICIYSWNKTNQEINDWTSCVETNPSQSHSLGIRRLCWKSCSDDDDDDDDDDTEQSEEGPEWLHFASCGEDHTVKIYRVNRRAL.

WD repeat units lie at residues 56 to 100 (GHTA…VLKS), 105 to 152 (GHEG…VKYL), 158 to 200 (RDGF…FQKA), 205 to 246 (GHED…ASFE), 280 to 328 (GHEN…GVWL), 338 to 377 (GNTL…PRQW), 385 to 424 (GHFD…DQKD), 438 to 476 (IHGY…VENF), 565 to 609 (GHGY…QVQS), 612 to 651 (FHTL…SSEF), 667 to 706 (VHSR…HNPM), 718 to 762 (DVGS…QEIN), and 775 to 831 (SHSL…RRAL).

This sequence belongs to the WD repeat ELP2 family. Component of the elongator complex which consists of ELP1, ELP2, ELP3, ELP4, ELP5 and ELP6. Interacts with STAT3 and JAKs.

It localises to the cytoplasm. The protein localises to the nucleus. The protein operates within tRNA modification; 5-methoxycarbonylmethyl-2-thiouridine-tRNA biosynthesis. Its function is as follows. Component of the elongator complex which is required for multiple tRNA modifications, including mcm5U (5-methoxycarbonylmethyl uridine), mcm5s2U (5-methoxycarbonylmethyl-2-thiouridine), and ncm5U (5-carbamoylmethyl uridine). The elongator comple catalyzes the formation of carboxymethyluridine in the wobble base at position 34 in tRNAs. The protein is Elongator complex protein 2 (Elp2) of Mus musculus (Mouse).